The chain runs to 1990 residues: Protein TANC2 (1990 aa).

Disordered stretches follow at residues methionine 1–glutamate 85 and serine 129–threonine 149. Phosphoserine occurs at positions 169, 238, 294, and 400. The disordered stretch occupies residues isoleucine 396–glutamate 442. Residues proline 419–cysteine 431 show a composition bias toward polar residues. ANK repeat units lie at residues glutamate 846 to tyrosine 878, asparagine 884 to alanine 913, serine 917 to histidine 946, asparagine 950 to glycine 979, alanine 990 to glutamate 1019, tryptophan 1033 to glutamine 1062, arginine 1066 to methionine 1095, glutamine 1099 to leucine 1128, glutamate 1132 to histidine 1161, asparagine 1165 to histidine 1194, and serine 1198 to proline 1227. TPR repeat units lie at residues leucine 1244–glutamate 1277, valine 1291–serine 1324, and tyrosine 1325–asparagine 1358. 3 disordered regions span residues cysteine 1372–histidine 1401, glutamate 1430–glutamine 1586, and leucine 1692–glycine 1718. Phosphoserine occurs at positions 1442 and 1458. The segment covering arginine 1469–tyrosine 1498 has biased composition (polar residues). Phosphoserine occurs at positions 1530 and 1545. The span at valine 1553–glutamine 1572 shows a compositional bias: polar residues. Arginine 1563 and arginine 1576 each carry asymmetric dimethylarginine. A Phosphoserine modification is found at serine 1579. Position 1722 is a phosphoserine (serine 1722). The span at serine 1783–threonine 1798 shows a compositional bias: low complexity. Disordered regions lie at residues serine 1783–serine 1803 and aspartate 1821–threonine 1843. Phosphoserine is present on residues serine 1824 and serine 1827. The N-linked (GlcNAc...) asparagine glycan is linked to asparagine 1928. The disordered stretch occupies residues serine 1968–valine 1990.

Belongs to the TANC family. As to quaternary structure, interacts with KIF1A; the interaction decreases in presence of calcium.

It is found in the cell projection. The protein localises to the dendritic spine. Scaffolding protein in the dendritic spines which acts as immobile postsynaptic posts able to recruit KIF1A-driven dense core vesicles to dendritic spines. The chain is Protein TANC2 (TANC2) from Homo sapiens (Human).